The sequence spans 81 residues: Small ribosomal subunit protein bS16 (81 aa).

This sequence belongs to the bacterial ribosomal protein bS16 family.

This is Small ribosomal subunit protein bS16 from Nautilia profundicola (strain ATCC BAA-1463 / DSM 18972 / AmH).